The sequence spans 708 residues: MADREGGCAAGRGRELEPELEPGPGPGSALEPGEEFEIVDRSQLPGPGDLRSATRPRAAEGWSAPILTLARRATGNLSASCGSALRAAAGLGGGDSGDGTARAASKCQMMEERANLMHMMKLSIKVLLQSALSLGRSLDADHAPLQQFFVVMEHCLKHGLKVKKSFIGQNKSFFGPLELVEKLCPEASDIATSVRNLPELKTAVGRGRAWLYLALMQKKLADYLKVLIDNKHLLSEFYEPEALMMEEEGMVIVGLLVGLNVLDANLCLKGEDLDSQVGVIDFSLYLKDVQDLDGGKEHERITDVLDQKNYVEELNRHLSCTVGDLQTKIDGLEKTNSKLQEELSAATDRICSLQEEQQQLREQNELIRERSEKSVEITKQDTKVELETYKQTRQGLDEMYSDVWKQLKEEKKVRLELEKELELQIGMKTEMEIAMKLLEKDTHEKQDTLVALRQQLEEVKAINLQMFHKAQNAESSLQQKNEAITSFEGKTNQVMSSMKQMEERLQHSERARQGAEERSHKLQQELGGRIGALQLQLSQLHEQCSSLEKELKSEKEQRQALQRELQHEKDTSSLLRMELQQVEGLKKELRELQDEKAELQKICEEQEQALQEMGLHLSQSKLKMEDIKEVNQALKGHAWLKDDEATHCRQCEKEFSISRRKHHCRNCGHIFCNTCSSNELALPSYPKPVRVCDSCHTLLLQRCSSTAS.

The segment covering 1–17 (MADREGGCAAGRGRELE) has biased composition (basic and acidic residues). The tract at residues 1 to 57 (MADREGGCAAGRGRELEPELEPGPGPGSALEPGEEFEIVDRSQLPGPGDLRSATRPR) is disordered. The 133-residue stretch at 139–271 (DADHAPLQQF…LDANLCLKGE (133 aa)) folds into the RUN domain. Positions 321–374 (TVGDLQTKIDGLEKTNSKLQEELSAATDRICSLQEEQQQLREQNELIRERSEKS) form a coiled coil. 2 positions are modified to phosphotyrosine: tyrosine 389 and tyrosine 400. Residues 405 to 617 (KQLKEEKKVR…QALQEMGLHL (213 aa)) adopt a coiled-coil conformation. Positions 493-522 (QVMSSMKQMEERLQHSERARQGAEERSHKL) are disordered. The span at 500 to 522 (QMEERLQHSERARQGAEERSHKL) shows a compositional bias: basic and acidic residues. The interval 615 to 625 (LHLSQSKLKME) is interaction with RAB4. Serine 620 bears the Phosphoserine mark. The FYVE-type zinc-finger motif lies at 642–700 (DDEATHCRQCEKEFSISRRKHHCRNCGHIFCNTCSSNELALPSYPKPVRVCDSCHTLLL). Zn(2+) is bound by residues cysteine 648, cysteine 651, cysteine 664, cysteine 667, cysteine 672, cysteine 675, cysteine 692, and cysteine 695.

As to quaternary structure, self-assembles through coiled coil domains to drive ELVA (endo-lysosomal vesicular assembly) formation. Interacts with BMX. May interact with SSB. Interacts with RAB4 and RAB5 that have been activated by GTP-binding. Interacts WITH RAB14 and RAB4B (GTP-bound form); the interactions allow endosomal tethering and fusion. Interacts with ARL8B (GTP-bound form); the interaction is required for RUFY1 endosomal location and promotes interaction with RAB14. Post-translationally, phosphorylation on Tyr-389 and/or Tyr-400 is required for interaction with BMX and endosomal targeting. Broadly expressed, with highest levels in lung, testis, kidney and brain.

The protein localises to the early endosome membrane. In terms of biological role, activating adapter involved in cargo sorting from early/recycling endosomes. Regulates retrieval of proteins from endosomes to the trans-Golgi network through interaction with the dynein-dynactin complex. Dual effector of RAB4B and RAB14, mediates a cooperative interaction allowing endosomal tethering and fusion. Binds phospholipid vesicles containing phosphatidylinositol 3-phosphate and participates in early endosomal trafficking. In oocytes, self-assembles to form a protein matrix which hold together endolysosomes, autophagosomes and proteasomes and generate non-membrane-bound compartments called endo-lysosomal vesicular assemblies (ELVAs). In immature oocytes, ELVAs sequester ubiquitinated protein aggregates and degrade them upon oocyte maturation. In Homo sapiens (Human), this protein is RUN and FYVE domain-containing protein 1.